The primary structure comprises 763 residues: Cadherin-like protein 26 (763 aa).

The N-terminal stretch at 1 to 20 (MDTRGCAWLLLLLSLPQGQS) is a signal peptide. 4 Cadherin domains span residues 21-140 (HQPL…APQF), 141-250 (PEKE…MPTF), 251-371 (MEDR…PPAF), and 370-478 (AFHP…APTL). Residues 21 to 590 (HQPLHRSKRR…SECEEPSDTW (570 aa)) lie on the Extracellular side of the membrane. 3 N-linked (GlcNAc...) asparagine glycosylation sites follow: Asn-56, Asn-60, and Asn-146. N-linked (GlcNAc...) asparagine glycosylation is found at Asn-394 and Asn-440. A helical transmembrane segment spans residues 591–611 (LLWWALSPVGAALMVLSAALL). Topologically, residues 612-763 (CLLRCSCTFG…AMCFTSRVPS (152 aa)) are cytoplasmic.

Homodimer. Component of a cadherin:catenin adhesion complex composed of at least of CDH26, beta-catenin/CTNNB1, alpha-catenin/CTNNA1 and p120 catenin/CTNND1. Post-translationally, N-glycosylated.

The protein localises to the cell membrane. Functionally, cadherins are calcium-dependent cell adhesion proteins. They preferentially interact with themselves in a homophilic manner in connecting cells; cadherins may thus contribute to the sorting of heterogeneous cell types. Ligand for integrins alpha-E/beta-7, ITGAE:ITGAB7, alpha-4/beta-7, ITGA4:ITGAB7 and alpha-4/beta-1, ITGA4:ITGAB1 through which modulates CD4(+) T cells activation. The protein is Cadherin-like protein 26 (Cdh26) of Mus musculus (Mouse).